A 383-amino-acid polypeptide reads, in one-letter code: Succinyl-diaminopimelate desuccinylase (383 aa).

Residue His72 participates in Zn(2+) binding. The active site involves Asp74. Asp105 serves as a coordination point for Zn(2+). Residue Glu139 is the Proton acceptor of the active site. Glu140, Glu168, and His356 together coordinate Zn(2+).

This sequence belongs to the peptidase M20A family. DapE subfamily. Homodimer. The cofactor is Zn(2+). Requires Co(2+) as cofactor.

The catalysed reaction is N-succinyl-(2S,6S)-2,6-diaminopimelate + H2O = (2S,6S)-2,6-diaminopimelate + succinate. It functions in the pathway amino-acid biosynthesis; L-lysine biosynthesis via DAP pathway; LL-2,6-diaminopimelate from (S)-tetrahydrodipicolinate (succinylase route): step 3/3. In terms of biological role, catalyzes the hydrolysis of N-succinyl-L,L-diaminopimelic acid (SDAP), forming succinate and LL-2,6-diaminopimelate (DAP), an intermediate involved in the bacterial biosynthesis of lysine and meso-diaminopimelic acid, an essential component of bacterial cell walls. The protein is Succinyl-diaminopimelate desuccinylase of Beijerinckia indica subsp. indica (strain ATCC 9039 / DSM 1715 / NCIMB 8712).